The sequence spans 266 residues: Ras-like protein family member 12 (266 aa).

GTP contacts are provided by residues 27 to 34 (GRRGAGKS), 74 to 78 (DTADL), and 134 to 137 (NKLD).

This sequence belongs to the small GTPase superfamily. Ras family.

It catalyses the reaction GTP + H2O = GDP + phosphate + H(+). The sequence is that of Ras-like protein family member 12 (Rasl12) from Mus musculus (Mouse).